The following is a 1418-amino-acid chain: Protein ced-11 (1418 aa).

7 helical membrane passes run 617–637 (FPIF…IIPV), 755–775 (YWLS…SVVL), 782–802 (LWDT…CFVL), 818–838 (VFDV…KVFP), 856–876 (VVSA…YIPL), 898–918 (FLFM…AVVF), and 986–1006 (IVIE…FAFF).

The protein localises to the membrane. Its function is as follows. Plays a major role in programmed cell death. The sequence is that of Protein ced-11 (ced-11) from Caenorhabditis elegans.